The primary structure comprises 856 residues: Glucans biosynthesis glucosyltransferase H (856 aa).

The next 6 membrane-spanning stretches (helical) occupy residues 144 to 164 (ILLV…KGIM), 198 to 218 (ILIM…TALM), 517 to 537 (VFLT…FLVL), 574 to 594 (LFST…ILIW), 608 to 628 (TLSM…RMIF), and 691 to 711 (IVGS…VGLG).

This sequence belongs to the glycosyltransferase 2 family. OpgH subfamily.

It localises to the cell inner membrane. It participates in glycan metabolism; osmoregulated periplasmic glucan (OPG) biosynthesis. Its function is as follows. Involved in the biosynthesis of osmoregulated periplasmic glucans (OPGs). This chain is Glucans biosynthesis glucosyltransferase H, found in Pseudomonas fluorescens (strain Pf0-1).